Here is a 303-residue protein sequence, read N- to C-terminus: MKSALPSIFTLVIIAEFIIGNLSNGFIVLINCIDWVSKRELSSVDKLLIILAISRIGLIWEILVSWFLALHYLAIFVSGTGLRIMIFSWIVSNHFNLWLATILSIFYLLKIASFSSPAFLYLKWRVNKVILLILLGTLVFLFLNLIQINMHIKDWLDRYERNTTWNFSMSDFETFSVSVKFTMTMFSLTPFTVAFISFLLLIFSLQKHLQKMQLNYKGHRDPKTKVHTNALKIVISFLLFYASFFLCVLXSWISELYQNTVIYMLCETIGVFYPSSHSFLLILGNAKLRQAFLLVAAKVWAKR.

Over 1 to 7 (MKSALPS) the chain is Extracellular. Residues 8–28 (IFTLVIIAEFIIGNLSNGFIV) form a helical membrane-spanning segment. The Cytoplasmic segment spans residues 29 to 55 (LINCIDWVSKRELSSVDKLLIILAISR). Residues 56–76 (IGLIWEILVSWFLALHYLAIF) traverse the membrane as a helical segment. At 77–85 (VSGTGLRIM) the chain is on the extracellular side. Residues 86–106 (IFSWIVSNHFNLWLATILSIF) traverse the membrane as a helical segment. The Cytoplasmic segment spans residues 107–128 (YLLKIASFSSPAFLYLKWRVNK). Residues 129-149 (VILLILLGTLVFLFLNLIQIN) form a helical membrane-spanning segment. Over 150 to 184 (MHIKDWLDRYERNTTWNFSMSDFETFSVSVKFTMT) the chain is Extracellular. N-linked (GlcNAc...) asparagine glycosylation is found at N162 and N166. A helical membrane pass occupies residues 185–205 (MFSLTPFTVAFISFLLLIFSL). The Cytoplasmic portion of the chain corresponds to 206–232 (QKHLQKMQLNYKGHRDPKTKVHTNALK). The helical transmembrane segment at 233–253 (IVISFLLFYASFFLCVLXSWI) threads the bilayer. At 254-261 (SELYQNTV) the chain is on the extracellular side. The chain crosses the membrane as a helical span at residues 262-282 (IYMLCETIGVFYPSSHSFLLI). The Cytoplasmic segment spans residues 283 to 303 (LGNAKLRQAFLLVAAKVWAKR).

This sequence belongs to the G-protein coupled receptor T2R family.

It is found in the membrane. In terms of biological role, receptor that may play a role in the perception of bitterness and is gustducin-linked. May play a role in sensing the chemical composition of the gastrointestinal content. The activity of this receptor may stimulate alpha gustducin, mediate PLC-beta-2 activation and lead to the gating of TRPM5. This is Taste receptor type 2 member 13 (TAS2R13) from Gorilla gorilla gorilla (Western lowland gorilla).